Here is a 481-residue protein sequence, read N- to C-terminus: Glycosyl hydrolase family 109 protein 1 (481 aa).

Residues 1–29 constitute a signal peptide (tat-type signal); it reads MDNSSSRRRFLQTLGLATGALAAGSFANA. NAD(+)-binding positions include 84–85, D106, 155–158, 175–176, and N204; these read ER, WEWH, and EV. Residues Y233, R252, 264–267, and Y347 contribute to the substrate site; that span reads YPTH. Position 264 (Y264) interacts with NAD(+).

It belongs to the Gfo/Idh/MocA family. Glycosyl hydrolase 109 subfamily. NAD(+) is required as a cofactor. Predicted to be exported by the Tat system. The position of the signal peptide cleavage has not been experimentally proven.

Glycosidase. This is Glycosyl hydrolase family 109 protein 1 from Akkermansia muciniphila (strain ATCC BAA-835 / DSM 22959 / JCM 33894 / BCRC 81048 / CCUG 64013 / CIP 107961 / Muc).